A 505-amino-acid polypeptide reads, in one-letter code: MTEQKYVVALDQGTTSSRAVVLDHDANIVSVSQREFTQIYPQAGWVEHDPMEIYATQSSTLVEALGKAGIRSDEVAAIGITNQRETTVVWNKETGKPVYNAIVWQCRRTATICEELKARGLESYIRDNTGLVLDPYFSGTKIKWILDNVEGAREQAEAGQLLFGTVDTWLVWKMTQGRVHVTDYTNASRTMLFNINTLQWDEKILAEFNIPLSMMPEVKKSSEVYGQTNIGGKGGTRIPIAGIAGDQQAALYGQMCVQAGQAKNTYGTGCFLLMNTGQEKVTSHNGLLTTLACGPRGEPAYALEGAVFMGGASIQWLRDELKLISDARDSEYFATKVDTSNGVYVVPAFTGLGAPYWDAYARGTIVGLTRGVNSNHIIRATLESIAYQTRDVLDAMQADSGIKLSALRVDGGAVANNFLMQFQADVLDTEVHRPKVTEVTALGAAYLAGLAVGFWDGLEELQGKAEIDRSFKPHHDEEKRQRRYKGWKRAVKCAQAWAVLHNEEE.

ADP is bound at residue Thr-14. ATP-binding residues include Thr-14, Thr-15, and Ser-16. Thr-14 contacts sn-glycerol 3-phosphate. Position 18 (Arg-18) interacts with ADP. Sn-glycerol 3-phosphate is bound by residues Arg-84, Glu-85, Tyr-136, and Asp-246. Positions 84, 85, 136, 246, and 247 each coordinate glycerol. ADP is bound by residues Thr-268 and Gly-311. ATP contacts are provided by Thr-268, Gly-311, Gln-315, and Gly-412. ADP is bound by residues Gly-412 and Asn-416.

The protein belongs to the FGGY kinase family.

The enzyme catalyses glycerol + ATP = sn-glycerol 3-phosphate + ADP + H(+). Its pathway is polyol metabolism; glycerol degradation via glycerol kinase pathway; sn-glycerol 3-phosphate from glycerol: step 1/1. Its activity is regulated as follows. Inhibited by fructose 1,6-bisphosphate (FBP). Key enzyme in the regulation of glycerol uptake and metabolism. Catalyzes the phosphorylation of glycerol to yield sn-glycerol 3-phosphate. The protein is Glycerol kinase of Vibrio cholerae serotype O1 (strain ATCC 39541 / Classical Ogawa 395 / O395).